Consider the following 516-residue polypeptide: Nucleolar complex protein 4 homolog (516 aa).

Transmembrane regions (helical) follow at residues serine 296–isoleucine 316, phenylalanine 347–alanine 367, and leucine 375–leucine 395.

This sequence belongs to the CBF/MAK21 family.

It is found in the nucleus membrane. Its subcellular location is the nucleus. It localises to the nucleolus. The protein is Nucleolar complex protein 4 homolog (Noc4l) of Rattus norvegicus (Rat).